The chain runs to 150 residues: Classical arabinogalactan protein 6 (150 aa).

The first 20 residues, 1-20, serve as a signal peptide directing secretion; sequence MARQFVVLVLLTLTIATAFA. Low complexity-rich tracts occupy residues 19-75 and 85-98; these read FAAD…SPAA and SASSPSDSAEAPTV. Residues 19 to 131 are disordered; it reads FAADAPSASP…ESPKSGAVTT (113 aa). Serine 126 carries GPI-anchor amidated serine lipidation. Residues 127–150 constitute a propeptide, removed in mature form; that stretch reads GAVTTAKFSVVGTVATVGFFFFSF.

Belongs to the classical AGP family. O-glycosylated on the hydroxyproline residues. Expressed in the anthers.

It localises to the cell membrane. Functionally, proteoglycan that seems to be implicated in diverse developmental roles such as differentiation, cell-cell recognition, embryogenesis and programmed cell death. Plays an important role during the formation of the nexine layer of the pollen wall. This chain is Classical arabinogalactan protein 6 (AGP6), found in Arabidopsis thaliana (Mouse-ear cress).